A 29-amino-acid chain; its full sequence is uncharacterized protein (29 aa).

It localises to the plastid. The protein resides in the chloroplast. This is an uncharacterized protein from Trieres chinensis (Marine centric diatom).